A 519-amino-acid chain; its full sequence is Aspartokinase (519 aa).

Serine 326 carries the post-translational modification Phosphoserine. Position 328 is a phosphothreonine (threonine 328). The ACT domain maps to 436–518 (LVGKHMRNTT…MLVEKPWLYS (83 aa)).

The protein belongs to the aspartokinase family.

The catalysed reaction is L-aspartate + ATP = 4-phospho-L-aspartate + ADP. The protein operates within amino-acid biosynthesis; L-methionine biosynthesis via de novo pathway; L-homoserine from L-aspartate: step 1/3. It functions in the pathway amino-acid biosynthesis; L-threonine biosynthesis; L-threonine from L-aspartate: step 1/5. Its function is as follows. Phosphorylates aspartate, the first step in the biosynthesis of amino acids that derive from aspartate (the aspartate family of amino acids), including methioinine and threonine, the latter of which is a precursor to isoleucine. The chain is Aspartokinase from Schizosaccharomyces pombe (strain 972 / ATCC 24843) (Fission yeast).